Reading from the N-terminus, the 329-residue chain is GTP 3',8-cyclase (329 aa).

Residues 8–234 (AFARKFYYLR…QLRSRADGPA (227 aa)) enclose the Radical SAM core domain. Residue arginine 17 participates in GTP binding. 2 residues coordinate [4Fe-4S] cluster: cysteine 24 and cysteine 28. S-adenosyl-L-methionine is bound at residue tyrosine 30. Residue cysteine 31 coordinates [4Fe-4S] cluster. A GTP-binding site is contributed by arginine 68. Glycine 72 serves as a coordination point for S-adenosyl-L-methionine. A GTP-binding site is contributed by threonine 99. Position 123 (serine 123) interacts with S-adenosyl-L-methionine. Residue lysine 160 coordinates GTP. Methionine 194 is a binding site for S-adenosyl-L-methionine. The [4Fe-4S] cluster site is built by cysteine 257 and cysteine 260. 262–264 (RLR) is a binding site for GTP. Position 274 (cysteine 274) interacts with [4Fe-4S] cluster.

This sequence belongs to the radical SAM superfamily. MoaA family. Monomer and homodimer. [4Fe-4S] cluster serves as cofactor.

It catalyses the reaction GTP + AH2 + S-adenosyl-L-methionine = (8S)-3',8-cyclo-7,8-dihydroguanosine 5'-triphosphate + 5'-deoxyadenosine + L-methionine + A + H(+). The protein operates within cofactor biosynthesis; molybdopterin biosynthesis. Its function is as follows. Catalyzes the cyclization of GTP to (8S)-3',8-cyclo-7,8-dihydroguanosine 5'-triphosphate. This Cronobacter sakazakii (strain ATCC BAA-894) (Enterobacter sakazakii) protein is GTP 3',8-cyclase.